Reading from the N-terminus, the 374-residue chain is tRNA-specific 2-thiouridylase MnmA (374 aa).

Residues 12 to 19 (GMSGGVDS) and methionine 38 each bind ATP. The tract at residues 98–100 (NPD) is interaction with target base in tRNA. Residue cysteine 103 is the Nucleophile of the active site. Cysteine 103 and cysteine 202 are disulfide-bonded. Position 128 (glycine 128) interacts with ATP. The interval 152–154 (KDQ) is interaction with tRNA. The active-site Cysteine persulfide intermediate is cysteine 202. The interval 316-317 (RY) is interaction with tRNA.

This sequence belongs to the MnmA/TRMU family.

It localises to the cytoplasm. The enzyme catalyses S-sulfanyl-L-cysteinyl-[protein] + uridine(34) in tRNA + AH2 + ATP = 2-thiouridine(34) in tRNA + L-cysteinyl-[protein] + A + AMP + diphosphate + H(+). In terms of biological role, catalyzes the 2-thiolation of uridine at the wobble position (U34) of tRNA, leading to the formation of s(2)U34. The chain is tRNA-specific 2-thiouridylase MnmA from Vibrio parahaemolyticus serotype O3:K6 (strain RIMD 2210633).